A 214-amino-acid polypeptide reads, in one-letter code: Large ribosomal subunit protein uL16-like (214 aa).

It belongs to the universal ribosomal protein uL16 family. As to quaternary structure, component of the 60S large ribosomal subunit (LSU).

It is found in the cytoplasm. Functionally, testis-specific component of the ribosome, which is required for the transition from prophase to metaphase in male meiosis I. Compensates for the inactivated X-linked RPL10 paralog during spermatogenesis. The ribosome is a large ribonucleoprotein complex responsible for the synthesis of proteins in the cell. The small ribosomal subunit (SSU) binds messenger RNAs (mRNAs) and translates the encoded message by selecting cognate aminoacyl-transfer RNA (tRNA) molecules. The large subunit (LSU) contains the ribosomal catalytic site termed the peptidyl transferase center (PTC), which catalyzes the formation of peptide bonds, thereby polymerizing the amino acids delivered by tRNAs into a polypeptide chain. The nascent polypeptides leave the ribosome through a tunnel in the LSU and interact with protein factors that function in enzymatic processing, targeting, and the membrane insertion of nascent chains at the exit of the ribosomal tunnel. The protein is Large ribosomal subunit protein uL16-like (RPL10L) of Bos taurus (Bovine).